The following is a 128-amino-acid chain: Small ribosomal subunit protein uS11 (128 aa).

The protein belongs to the universal ribosomal protein uS11 family. Part of the 30S ribosomal subunit. Interacts with proteins S7 and S18. Binds to IF-3.

Its function is as follows. Located on the platform of the 30S subunit, it bridges several disparate RNA helices of the 16S rRNA. Forms part of the Shine-Dalgarno cleft in the 70S ribosome. The polypeptide is Small ribosomal subunit protein uS11 (Solidesulfovibrio magneticus (strain ATCC 700980 / DSM 13731 / RS-1) (Desulfovibrio magneticus)).